Consider the following 210-residue polypeptide: Large ribosomal subunit protein uL3 (210 aa).

This sequence belongs to the universal ribosomal protein uL3 family. In terms of assembly, part of the 50S ribosomal subunit. Forms a cluster with proteins L14 and L19.

One of the primary rRNA binding proteins, it binds directly near the 3'-end of the 23S rRNA, where it nucleates assembly of the 50S subunit. This Lawsonia intracellularis (strain PHE/MN1-00) protein is Large ribosomal subunit protein uL3.